The sequence spans 315 residues: Transaldolase (315 aa).

Residue Lys-128 is the Schiff-base intermediate with substrate of the active site.

The protein belongs to the transaldolase family. Type 1 subfamily. As to quaternary structure, homodimer.

The protein localises to the cytoplasm. The enzyme catalyses D-sedoheptulose 7-phosphate + D-glyceraldehyde 3-phosphate = D-erythrose 4-phosphate + beta-D-fructose 6-phosphate. It functions in the pathway carbohydrate degradation; pentose phosphate pathway; D-glyceraldehyde 3-phosphate and beta-D-fructose 6-phosphate from D-ribose 5-phosphate and D-xylulose 5-phosphate (non-oxidative stage): step 2/3. In terms of biological role, transaldolase is important for the balance of metabolites in the pentose-phosphate pathway. In Opitutus terrae (strain DSM 11246 / JCM 15787 / PB90-1), this protein is Transaldolase.